Consider the following 157-residue polypeptide: MPELFAYTDGACSGNPGPGGWGALLIARDGDTVVKERALKGGEAETTNNRMELLAAIHALEALERPARLTVVTDSAYVKGGVTGWIHGWKRNGWKTSTKKPVKNEDLWRRLDAAQARHEVQWEWVKGHAGHPENERADALAREGMAPFKPGKSKAGR.

The region spanning M1 to A146 is the RNase H type-1 domain. Mg(2+) is bound by residues D9, E52, D74, and D138.

The protein belongs to the RNase H family. As to quaternary structure, monomer. Mg(2+) serves as cofactor.

It localises to the cytoplasm. It catalyses the reaction Endonucleolytic cleavage to 5'-phosphomonoester.. Endonuclease that specifically degrades the RNA of RNA-DNA hybrids. This Dinoroseobacter shibae (strain DSM 16493 / NCIMB 14021 / DFL 12) protein is Ribonuclease H.